The chain runs to 313 residues: tRNA dimethylallyltransferase (313 aa).

9–16 (GPTASGKT) is an ATP binding site. 11 to 16 (TASGKT) provides a ligand contact to substrate. The segment at 34–37 (DSMQ) is interaction with substrate tRNA.

Belongs to the IPP transferase family. Monomer. The cofactor is Mg(2+).

The enzyme catalyses adenosine(37) in tRNA + dimethylallyl diphosphate = N(6)-dimethylallyladenosine(37) in tRNA + diphosphate. Catalyzes the transfer of a dimethylallyl group onto the adenine at position 37 in tRNAs that read codons beginning with uridine, leading to the formation of N6-(dimethylallyl)adenosine (i(6)A). This is tRNA dimethylallyltransferase from Acetivibrio thermocellus (strain ATCC 27405 / DSM 1237 / JCM 9322 / NBRC 103400 / NCIMB 10682 / NRRL B-4536 / VPI 7372) (Clostridium thermocellum).